A 695-amino-acid chain; its full sequence is Follicle-stimulating hormone receptor (695 aa).

A signal peptide spans 1 to 17; the sequence is MALLLVALLAFLSLGSG. 2 disulfides stabilise this stretch: C18–C25 and C23–C32. The 29-residue stretch at 18–46 folds into the LRRNT domain; it reads CHHRLCHCSNGVFLCQESKVTEIPSDLPR. At 18–366 the chain is on the extracellular side; sequence CHHRLCHCSN…EDIMGDDILR (349 aa). LRR repeat units lie at residues 49 to 72, 73 to 97, 98 to 118, 119 to 143, 144 to 169, 170 to 192, 193 to 216, 217 to 240, and 241 to 259; these read VELR…FGDL, EKIE…LPKL, HEIR…AFQN, LPNL…KIQS, LQKV…MGLS, FESM…AFNG, TQLD…VFQG, ASGP…GLEN, and LKKL…PSLE. N-linked (GlcNAc...) asparagine glycosylation is found at N191 and N199. Intrachain disulfides connect C275-C346, C276-C292, C276-C356, and C292-C338. N293 carries N-linked (GlcNAc...) asparagine glycosylation. At Y335 the chain carries Sulfotyrosine. The helical transmembrane segment at 367-387 threads the bilayer; sequence VLIWFISILAITGNILVLVIL. The Cytoplasmic segment spans residues 388–398; that stretch reads ITSQYKLTVPR. The chain crosses the membrane as a helical span at residues 399 to 421; the sequence is FLMCNLAFADLCIGIYLLLIASV. At 422–443 the chain is on the extracellular side; it reads DVHTKTEYHNYAIDWQTGAGCD. A disulfide bridge links C442 with C517. A helical membrane pass occupies residues 444-465; the sequence is AAGFFTVFASELSVYTLTAITL. The Cytoplasmic segment spans residues 466–485; the sequence is ERWHTITHAMQLECKVQLRH. A helical transmembrane segment spans residues 486 to 508; that stretch reads AASIMLVGWIFAFAVALFPIFGI. The Extracellular portion of the chain corresponds to 509–528; that stretch reads SSYMKVSICLPMDIDSPLSQ. The chain crosses the membrane as a helical span at residues 529-550; the sequence is LYVMSLLVLNVLAFVVICGCYT. The Cytoplasmic segment spans residues 551–573; that stretch reads HIYLTVRNPNITSSSSDTKIAKR. Residues 574 to 597 traverse the membrane as a helical segment; it reads MAMLIFTDFLCMAPISFFAISASL. Topologically, residues 598–608 are extracellular; it reads KVPLITVSKSK. The helical transmembrane segment at 609 to 630 threads the bilayer; sequence ILLVLFYPINSCANPFLYAIFT. The Cytoplasmic portion of the chain corresponds to 631 to 695; sequence KNFRRDFFIL…LIPLRHLAKN (65 aa).

It belongs to the G-protein coupled receptor 1 family. FSH/LSH/TSH subfamily. Homotrimer. Functions as a homotrimer binding the FSH hormone heterodimer composed of CGA and FSHB. Interacts with ARRB2. Interacts with APPL2; interaction is independent of follicle stimulating hormone stimulation. In terms of processing, N-glycosylated; indirectly required for FSH-binding, possibly via a conformational change that allows high affinity binding of hormone. Post-translationally, sulfated.

Its subcellular location is the cell membrane. In terms of biological role, g protein-coupled receptor for follitropin, the follicle-stimulating hormone. Through cAMP production activates the downstream PI3K-AKT and ERK1/ERK2 signaling pathways. The polypeptide is Follicle-stimulating hormone receptor (FSHR) (Bos taurus (Bovine)).